The primary structure comprises 312 residues: tRNA-cytidine(32) 2-sulfurtransferase (312 aa).

The PP-loop motif signature appears at 39 to 44 (SGGKDS). [4Fe-4S] cluster contacts are provided by C114, C117, and C205.

Belongs to the TtcA family. Homodimer. Mg(2+) serves as cofactor. Requires [4Fe-4S] cluster as cofactor.

The protein localises to the cytoplasm. The catalysed reaction is cytidine(32) in tRNA + S-sulfanyl-L-cysteinyl-[cysteine desulfurase] + AH2 + ATP = 2-thiocytidine(32) in tRNA + L-cysteinyl-[cysteine desulfurase] + A + AMP + diphosphate + H(+). The protein operates within tRNA modification. Catalyzes the ATP-dependent 2-thiolation of cytidine in position 32 of tRNA, to form 2-thiocytidine (s(2)C32). The sulfur atoms are provided by the cysteine/cysteine desulfurase (IscS) system. This chain is tRNA-cytidine(32) 2-sulfurtransferase, found in Cupriavidus pinatubonensis (strain JMP 134 / LMG 1197) (Cupriavidus necator (strain JMP 134)).